A 188-amino-acid polypeptide reads, in one-letter code: Augmin complex subunit dgt4 (188 aa).

Residues 141–163 (QREFAQNQEALRSLRTAVDGLEN) adopt a coiled-coil conformation.

In terms of assembly, component of the augmin complex composed of dgt2, dgt3, dgt4, dgt5, dgt6, msd1, msd5 and wac. The complex interacts directly or indirectly with microtubules and is required for centrosome-independent generation of spindle microtubules.

It is found in the cytoplasm. The protein localises to the cytoskeleton. Its subcellular location is the spindle. Its function is as follows. As part of the augmin complex, plays a role in centrosome-independent generation of spindle microtubules. The complex is required for mitotic spindle assembly through its involvement in localizing gamma-tubulin to spindle microtubules. The polypeptide is Augmin complex subunit dgt4 (Drosophila melanogaster (Fruit fly)).